A 57-amino-acid chain; its full sequence is Protein translocase subunit SecE (57 aa).

Residues 34 to 54 (AGILLIGAIGFLVFLIMGGIV) traverse the membrane as a helical segment.

This sequence belongs to the SecE/SEC61-gamma family. Component of the Sec protein translocase complex. Heterotrimer consisting of SecY (alpha), SecG (beta) and SecE (gamma) subunits. The heterotrimers can form oligomers, although 1 heterotrimer is thought to be able to translocate proteins. Interacts with the ribosome. May interact with SecDF, and other proteins may be involved.

Its subcellular location is the cell membrane. In terms of biological role, essential subunit of the Sec protein translocation channel SecYEG. Clamps together the 2 halves of SecY. May contact the channel plug during translocation. In Halobacterium salinarum (strain ATCC 29341 / DSM 671 / R1), this protein is Protein translocase subunit SecE.